The chain runs to 275 residues: NH(3)-dependent NAD(+) synthetase (275 aa).

Position 46 to 53 (46 to 53 (GISGGQDS)) interacts with ATP. Asp52 serves as a coordination point for Mg(2+). Arg140 contributes to the deamido-NAD(+) binding site. Thr160 provides a ligand contact to ATP. Glu165 contacts Mg(2+). 2 residues coordinate deamido-NAD(+): Lys173 and Asp180. Positions 189 and 211 each coordinate ATP. A deamido-NAD(+)-binding site is contributed by 260–261 (HK).

This sequence belongs to the NAD synthetase family. As to quaternary structure, homodimer.

It catalyses the reaction deamido-NAD(+) + NH4(+) + ATP = AMP + diphosphate + NAD(+) + H(+). The protein operates within cofactor biosynthesis; NAD(+) biosynthesis; NAD(+) from deamido-NAD(+) (ammonia route): step 1/1. In terms of biological role, catalyzes the ATP-dependent amidation of deamido-NAD to form NAD. Uses ammonia as a nitrogen source. In Escherichia coli O157:H7, this protein is NH(3)-dependent NAD(+) synthetase.